A 1009-amino-acid polypeptide reads, in one-letter code: DENN domain-containing protein 2A (1009 aa).

4 disordered regions span residues 15–153 (AEAS…LRFQ), 171–334 (KDGS…HRKS), 434–479 (KLLD…KKRK), and 498–532 (KRVK…LKAH). Composition is skewed to basic and acidic residues over residues 45–59 (NIKD…KKEV), 130–147 (QPER…EPRL), 218–247 (HPSD…DRSL), and 275–284 (HAGEGDKDGK). A compositionally biased stretch (pro residues) spans 297–314 (PPLPSLPPPPLPSSPPPS). The span at 434–443 (KLLDTRKLSR) shows a compositional bias: basic and acidic residues. Over residues 503–513 (LSQSMESNSGK) the composition is skewed to polar residues. Ser-551 is subject to Phosphoserine. The uDENN domain maps to 566–715 (EYFVVVSLHK…PFPALGKTIL (150 aa)). In terms of domain architecture, cDENN spans 737–870 (RLEHVDFESL…LQVALEHILE (134 aa)). The 98-residue stretch at 872–969 (RNELACEQDE…QERELRRQDA (98 aa)) folds into the dDENN domain.

It localises to the cytoplasm. Its subcellular location is the cytoskeleton. Functionally, guanine nucleotide exchange factor (GEF) which may activate RAB9A and RAB9B. Promotes the exchange of GDP to GTP, converting inactive GDP-bound Rab proteins into their active GTP-bound form. May play a role in late endosomes back to trans-Golgi network/TGN transport. The chain is DENN domain-containing protein 2A (DENND2A) from Homo sapiens (Human).